The chain runs to 208 residues: Guanylate kinase (208 aa).

One can recognise a Guanylate kinase-like domain in the interval 8–187 (GVCLVISAPS…AISQARSVLT (180 aa)). 15-22 (APSGAGKS) is a binding site for ATP.

This sequence belongs to the guanylate kinase family.

It localises to the cytoplasm. It catalyses the reaction GMP + ATP = GDP + ADP. Functionally, essential for recycling GMP and indirectly, cGMP. This is Guanylate kinase from Gluconobacter oxydans (strain 621H) (Gluconobacter suboxydans).